The primary structure comprises 183 residues: MSQTAKVLLLYAHPESQDSVANRVLLKPAQQLSNVTVHDLYAHYPDFFIDIPREQELLRQHDVIVFQHPLYTYSCPALLKEWLDRVLSRGFSSGPGGNQLAGKYWRSVITTGEPESAYRHDSLNRYPMSDILRPFELTAAMCRMHWMSPMIVYWARRQQPQALASHAKAYGEWLASPIPTGGH.

The protein belongs to the NAD(P)H dehydrogenase (quinone) family. KefG subfamily. Interacts with KefB.

The protein localises to the cell inner membrane. It carries out the reaction a quinone + NADH + H(+) = a quinol + NAD(+). The enzyme catalyses a quinone + NADPH + H(+) = a quinol + NADP(+). Functionally, regulatory subunit of a potassium efflux system that confers protection against electrophiles. Required for full activity of KefB. In Enterobacter sp. (strain 638), this protein is Glutathione-regulated potassium-efflux system ancillary protein KefG.